The sequence spans 311 residues: 4-hydroxy-3-methylbut-2-enyl diphosphate reductase (311 aa).

C12 serves as a coordination point for [4Fe-4S] cluster. Residues H41 and H74 each contribute to the (2E)-4-hydroxy-3-methylbut-2-enyl diphosphate site. 2 residues coordinate dimethylallyl diphosphate: H41 and H74. The isopentenyl diphosphate site is built by H41 and H74. C96 contacts [4Fe-4S] cluster. H124 is a binding site for (2E)-4-hydroxy-3-methylbut-2-enyl diphosphate. Residue H124 participates in dimethylallyl diphosphate binding. Residue H124 coordinates isopentenyl diphosphate. Catalysis depends on E126, which acts as the Proton donor. T168 serves as a coordination point for (2E)-4-hydroxy-3-methylbut-2-enyl diphosphate. A [4Fe-4S] cluster-binding site is contributed by C198. The (2E)-4-hydroxy-3-methylbut-2-enyl diphosphate site is built by S226, S227, N228, and S270. Dimethylallyl diphosphate-binding residues include S226, S227, N228, and S270. Residues S226, S227, N228, and S270 each contribute to the isopentenyl diphosphate site.

It belongs to the IspH family. [4Fe-4S] cluster serves as cofactor.

The enzyme catalyses isopentenyl diphosphate + 2 oxidized [2Fe-2S]-[ferredoxin] + H2O = (2E)-4-hydroxy-3-methylbut-2-enyl diphosphate + 2 reduced [2Fe-2S]-[ferredoxin] + 2 H(+). It catalyses the reaction dimethylallyl diphosphate + 2 oxidized [2Fe-2S]-[ferredoxin] + H2O = (2E)-4-hydroxy-3-methylbut-2-enyl diphosphate + 2 reduced [2Fe-2S]-[ferredoxin] + 2 H(+). It participates in isoprenoid biosynthesis; dimethylallyl diphosphate biosynthesis; dimethylallyl diphosphate from (2E)-4-hydroxy-3-methylbutenyl diphosphate: step 1/1. Its pathway is isoprenoid biosynthesis; isopentenyl diphosphate biosynthesis via DXP pathway; isopentenyl diphosphate from 1-deoxy-D-xylulose 5-phosphate: step 6/6. Functionally, catalyzes the conversion of 1-hydroxy-2-methyl-2-(E)-butenyl 4-diphosphate (HMBPP) into a mixture of isopentenyl diphosphate (IPP) and dimethylallyl diphosphate (DMAPP). Acts in the terminal step of the DOXP/MEP pathway for isoprenoid precursor biosynthesis. The chain is 4-hydroxy-3-methylbut-2-enyl diphosphate reductase from Saccharophagus degradans (strain 2-40 / ATCC 43961 / DSM 17024).